A 251-amino-acid polypeptide reads, in one-letter code: Triosephosphate isomerase (251 aa).

9–11 (NWK) is a substrate binding site. His-95 serves as the catalytic Electrophile. The Proton acceptor role is filled by Glu-167. Residues Gly-173, Ser-213, and 234-235 (GG) contribute to the substrate site. Ser-213 carries the post-translational modification Phosphoserine.

It belongs to the triosephosphate isomerase family. Homodimer.

It is found in the cytoplasm. It carries out the reaction D-glyceraldehyde 3-phosphate = dihydroxyacetone phosphate. The protein operates within carbohydrate biosynthesis; gluconeogenesis. It functions in the pathway carbohydrate degradation; glycolysis; D-glyceraldehyde 3-phosphate from glycerone phosphate: step 1/1. Functionally, involved in the gluconeogenesis. Catalyzes stereospecifically the conversion of dihydroxyacetone phosphate (DHAP) to D-glyceraldehyde-3-phosphate (G3P). This Bacillus anthracis protein is Triosephosphate isomerase.